Here is a 697-residue protein sequence, read N- to C-terminus: CENP-A multicopy suppressor protein 2 (697 aa).

Residues 351–378 (CQNCGTIKTANWRNATYMNITLMLCNAC) form a GATA-type; atypical zinc finger. The tract at residues 443 to 484 (PLNRLTSLDSTHSAPDPNHISKPSVVNQQKSRGGPRTAKLKN) is disordered. Residues 445–455 (NRLTSLDSTHS) show a composition bias toward polar residues.

As to quaternary structure, interacts with CENP-A.

Its subcellular location is the nucleus. It localises to the chromosome. The protein localises to the centromere. Functionally, required for proper chromosome segregation via regulation of CENP-A localization to the centromere. The chain is CENP-A multicopy suppressor protein 2 (ams2) from Schizosaccharomyces pombe (strain 972 / ATCC 24843) (Fission yeast).